The chain runs to 369 residues: 3 beta-hydroxysteroid dehydrogenase type 7 (369 aa).

Y159 functions as the Proton acceptor in the catalytic mechanism. K163 lines the NAD(+) pocket. Transmembrane regions (helical) follow at residues 289–309 (LLPY…QWLL) and 312–334 (LVLY…FTVS).

It belongs to the 3-beta-HSD family. In terms of tissue distribution, predominantly expressed in liver.

The protein localises to the endoplasmic reticulum membrane. The catalysed reaction is 7alpha-hydroxycholesterol + NAD(+) = 7alpha-hydroxycholest-4-en-3-one + NADH + H(+). It carries out the reaction 7alpha,25-dihydroxycholesterol + NAD(+) = 7alpha,25-dihydroxy-4-cholesten-3-one + NADH + H(+). The enzyme catalyses (25R)-cholest-5-en-3beta,7alpha,26-triol + NAD(+) = (25R)-7alpha,26-dihydroxycholest-4-en-3-one + NADH + H(+). It catalyses the reaction (24S)-7alpha-dihydroxycholesterol + NAD(+) = (24S)-7alpha,24-dihydroxycholest-4-en-3-one + NADH + H(+). Its pathway is lipid metabolism; steroid biosynthesis. Functionally, the 3-beta-HSD enzymatic system plays a crucial role in the biosynthesis of all classes of hormonal steroids. HSD VII is active against four 7-alpha-hydroxylated sterols. Does not metabolize several different C(19/21) steroids as substrates. Involved in bile acid synthesis. Plays a key role in cell positioning and movement in lymphoid tissues by mediating degradation of 7-alpha,25-dihydroxycholesterol (7-alpha,25-OHC): 7-alpha,25-OHC acts as a ligand for the G protein-coupled receptor GPR183/EBI2, a chemotactic receptor for a number of lymphoid cells. The protein is 3 beta-hydroxysteroid dehydrogenase type 7 of Mus musculus (Mouse).